Consider the following 58-residue polypeptide: Small ribosomal subunit protein bS21 (58 aa).

The protein belongs to the bacterial ribosomal protein bS21 family.

This is Small ribosomal subunit protein bS21 from Staphylococcus saprophyticus subsp. saprophyticus (strain ATCC 15305 / DSM 20229 / NCIMB 8711 / NCTC 7292 / S-41).